The primary structure comprises 283 residues: uncharacterized protein (283 aa).

4 consecutive transmembrane segments (helical) span residues 11–31, 35–55, 56–76, and 93–113; these read LFAY…YVSA, EGAL…WFGP, IYAL…MMFF, and LVVW…IHDI. In terms of domain architecture, GGDEF spans 162–283; the sequence is NSFVFLLLHM…LENEMMMNEL (122 aa).

The protein resides in the cell membrane. This is an uncharacterized protein from Bacillus subtilis (strain 168).